A 546-amino-acid chain; its full sequence is MAAKDVKFGDSARKKMLVGVNVLADAVKATLGPKGRNVVLAKSFGAPTITKDGVSVAKEIELKDAFENMGAQLVKEVASKANDAAGDGTTTATVLAQAIVNEGLKAVAAGMNPMDLKRGIDKATAAVVAELKNLSKPCADSKAIAQVGTISANSDNSIGEIIAEAMEKVGKEGVITVEEGSGLENELSVVEGMQFDRGYLSPYFVNKPDTMVAELEGPLLLLVDKKISNIRELLPVLEAVAKAGRPLLIVAEDVEGEALATLVVNNMRGIVKVAAVKAPGFGDRRKAMLQDIAVLTGGQVISEEIGLSLETATLEHLGNAKRVILSKENTTIIDGAGADTEIEARVKQIRAQIEETSSDYDREKLQERLAKLAGGVAVIKVGAGTEVEMKEKKARVEDALHATRAAVEEGVVPGGGVALVRALAAIVDLKGDNEDQNVGIALLRRAVESPLRQITANAGDEPSVVADKVKQGSGNFGYNAATGEYGDMIEMGILDPAKVTRSALQAAASIGGLMITTEAMVADLPEDKPAAGMPDMGGMGGMGGMM.

Residues 30–33 (TLGP), Lys51, 87–91 (DGTTT), Gly415, 479–481 (NAA), and Asp495 each bind ATP.

Belongs to the chaperonin (HSP60) family. As to quaternary structure, forms a cylinder of 14 subunits composed of two heptameric rings stacked back-to-back. Interacts with the co-chaperonin GroES.

It localises to the cytoplasm. The enzyme catalyses ATP + H2O + a folded polypeptide = ADP + phosphate + an unfolded polypeptide.. Together with its co-chaperonin GroES, plays an essential role in assisting protein folding. The GroEL-GroES system forms a nano-cage that allows encapsulation of the non-native substrate proteins and provides a physical environment optimized to promote and accelerate protein folding. This is Chaperonin GroEL from Pseudomonas putida (strain ATCC 700007 / DSM 6899 / JCM 31910 / BCRC 17059 / LMG 24140 / F1).